The chain runs to 102 residues: Large ribosomal subunit protein bL21 (102 aa).

Belongs to the bacterial ribosomal protein bL21 family. As to quaternary structure, part of the 50S ribosomal subunit. Contacts protein L20.

Its function is as follows. This protein binds to 23S rRNA in the presence of protein L20. In Neisseria meningitidis serogroup A / serotype 4A (strain DSM 15465 / Z2491), this protein is Large ribosomal subunit protein bL21.